Here is a 526-residue protein sequence, read N- to C-terminus: Butyrophilin subfamily 1 member A1 (526 aa).

Positions methionine 1–serine 26 are cleaved as a signal peptide. Ig-like V-type domains lie at alanine 27–histidine 138 and proline 148–serine 234. Residues alanine 27–arginine 242 are Extracellular-facing. Intrachain disulfides connect cysteine 50/cysteine 124 and cysteine 164/cysteine 218. N-linked (GlcNAc...) asparagine glycosylation is found at asparagine 55 and asparagine 215. A helical membrane pass occupies residues leucine 243–tryptophan 269. Over arginine 270 to proline 526 the chain is Cytoplasmic. In terms of domain architecture, B30.2/SPRY spans serine 285–proline 479. A disordered region spans residues isoleucine 495–proline 526. Residues serine 504–histidine 513 are compositionally biased toward basic and acidic residues. Positions isoleucine 517–proline 526 are enriched in polar residues.

This sequence belongs to the immunoglobulin superfamily. BTN/MOG family. Seems to associate with xanthine dehydrogenase/oxidase. N-glycosylated.

The protein resides in the membrane. The protein localises to the secreted. In terms of biological role, may function in the secretion of milk-fat droplets. May act as a specific membrane-associated receptor for the association of cytoplasmic droplets with the apical plasma membrane. Inhibits the proliferation of CD4 and CD8 T-cells activated by anti-CD3 antibodies, T-cell metabolism and IL2 and IFNG secretion. The chain is Butyrophilin subfamily 1 member A1 (BTN1A1) from Homo sapiens (Human).